The primary structure comprises 89 residues: Small ribosomal subunit protein uS15 (89 aa).

It belongs to the universal ribosomal protein uS15 family. In terms of assembly, part of the 30S ribosomal subunit. Forms a bridge to the 50S subunit in the 70S ribosome, contacting the 23S rRNA.

Its function is as follows. One of the primary rRNA binding proteins, it binds directly to 16S rRNA where it helps nucleate assembly of the platform of the 30S subunit by binding and bridging several RNA helices of the 16S rRNA. Functionally, forms an intersubunit bridge (bridge B4) with the 23S rRNA of the 50S subunit in the ribosome. This Exiguobacterium sibiricum (strain DSM 17290 / CCUG 55495 / CIP 109462 / JCM 13490 / 255-15) protein is Small ribosomal subunit protein uS15.